The primary structure comprises 101 residues: NADH-quinone oxidoreductase subunit K (101 aa).

Transmembrane regions (helical) follow at residues L4 to L24, I30 to F50, and V61 to L81.

Belongs to the complex I subunit 4L family. In terms of assembly, NDH-1 is composed of 14 different subunits. Subunits NuoA, H, J, K, L, M, N constitute the membrane sector of the complex.

It is found in the cell inner membrane. The catalysed reaction is a quinone + NADH + 5 H(+)(in) = a quinol + NAD(+) + 4 H(+)(out). Its function is as follows. NDH-1 shuttles electrons from NADH, via FMN and iron-sulfur (Fe-S) centers, to quinones in the respiratory chain. The immediate electron acceptor for the enzyme in this species is believed to be ubiquinone. Couples the redox reaction to proton translocation (for every two electrons transferred, four hydrogen ions are translocated across the cytoplasmic membrane), and thus conserves the redox energy in a proton gradient. This Cupriavidus metallidurans (strain ATCC 43123 / DSM 2839 / NBRC 102507 / CH34) (Ralstonia metallidurans) protein is NADH-quinone oxidoreductase subunit K.